An 851-amino-acid chain; its full sequence is DNA mismatch repair protein MutS (851 aa).

602–609 (GPNMSGKS) provides a ligand contact to ATP.

The protein belongs to the DNA mismatch repair MutS family.

This protein is involved in the repair of mismatches in DNA. It is possible that it carries out the mismatch recognition step. This protein has a weak ATPase activity. The sequence is that of DNA mismatch repair protein MutS from Streptococcus equi subsp. equi (strain 4047).